The following is a 325-amino-acid chain: Lipoyl synthase (325 aa).

Residues 1–31 are disordered; that stretch reads MASDSDLLDTKPAETRHPEKAHRPDQPTLRK. The segment covering 8-31 has biased composition (basic and acidic residues); the sequence is LDTKPAETRHPEKAHRPDQPTLRK. [4Fe-4S] cluster contacts are provided by Cys61, Cys66, Cys72, Cys87, Cys91, Cys94, and Ser300. Positions 73–289 constitute a Radical SAM core domain; sequence WAKKHATFMI…AEIGRAKGFL (217 aa).

This sequence belongs to the radical SAM superfamily. Lipoyl synthase family. Requires [4Fe-4S] cluster as cofactor.

The protein resides in the cytoplasm. It catalyses the reaction [[Fe-S] cluster scaffold protein carrying a second [4Fe-4S](2+) cluster] + N(6)-octanoyl-L-lysyl-[protein] + 2 oxidized [2Fe-2S]-[ferredoxin] + 2 S-adenosyl-L-methionine + 4 H(+) = [[Fe-S] cluster scaffold protein] + N(6)-[(R)-dihydrolipoyl]-L-lysyl-[protein] + 4 Fe(3+) + 2 hydrogen sulfide + 2 5'-deoxyadenosine + 2 L-methionine + 2 reduced [2Fe-2S]-[ferredoxin]. It participates in protein modification; protein lipoylation via endogenous pathway; protein N(6)-(lipoyl)lysine from octanoyl-[acyl-carrier-protein]: step 2/2. Catalyzes the radical-mediated insertion of two sulfur atoms into the C-6 and C-8 positions of the octanoyl moiety bound to the lipoyl domains of lipoate-dependent enzymes, thereby converting the octanoylated domains into lipoylated derivatives. This is Lipoyl synthase from Methylocella silvestris (strain DSM 15510 / CIP 108128 / LMG 27833 / NCIMB 13906 / BL2).